A 281-amino-acid polypeptide reads, in one-letter code: Nuclear transcription factor Y subunit nfya-2 (281 aa).

2 disordered regions span residues 1–27 and 163–261; these read MNPRGNPSKMPTQIVLNRRPAAPARPQ and REMR…VQEE. The Subunit association domain (SAD) motif lies at 150-173; sequence MVNPRQYKRIIKRREMRQKMEDSG. Over residues 166 to 188 the composition is skewed to basic and acidic residues; it reads RQKMEDSGRLPLERQKYMHESRR. The NFYA/HAP2-type DNA-binding region spans 180-204; sequence QKYMHESRRQHALKRRRTGGRFDAN. Positions 189 to 198 are enriched in basic residues; it reads QHALKRRRTG. A compositionally biased stretch (low complexity) spans 204–220; that stretch reads NAEAAAASSEPSISSAA.

Belongs to the NFYA/HAP2 subunit family. As to quaternary structure, forms a heterotrimeric transcription factor complex (nfya-2-NF-Y complex) composed of nfya-2, nfyb-1 and nfyc-1. Interacts with the nfyb-1 and nfyc-1 dimer; the interaction is required for subsequent binding to the 5'-CCAAT-3' box motif in DNA. Does not interact with either nfyb-1 or nfyc-1 in their monomeric form. As to expression, highly expressed in certain parts of the gonads. Expressed in the spermatheca, intestine and in some neurons in the head. Not expressed in the intestine, the hypodermis, body wall muscle surrounding the pseudocoelomic space, secretory cells in the pharyngeal terminal bulb wall, in the small ganglia surrounding the pharynx and in the neurons running anteriorly to the sensory organs in the head.

It is found in the nucleus. In terms of biological role, component of the sequence-specific heterotrimeric transcription factor (nfya-2-NF-Y) which specifically recognizes a 5'-CCAAT-3' box motif found in the promoters of its target genes to regulate their expression and control cellular identity in particular tissue types. In association with the components in the nfya-2-NF-Y complex, may repress the expression of the T-box transcription factor tbx-2 throughout larval development, which most likely restricts its expression to certain tissues. This chain is Nuclear transcription factor Y subunit nfya-2, found in Caenorhabditis elegans.